Consider the following 625-residue polypeptide: tRNA uridine 5-carboxymethylaminomethyl modification enzyme MnmG (625 aa).

FAD contacts are provided by residues 9–14 (GGGHAG), Val121, and Ser177. Residue 271–285 (GPRYCPSIEDKVNRF) participates in NAD(+) binding. Residue Gln368 coordinates FAD.

This sequence belongs to the MnmG family. Homodimer. Heterotetramer of two MnmE and two MnmG subunits. It depends on FAD as a cofactor.

The protein localises to the cytoplasm. In terms of biological role, NAD-binding protein involved in the addition of a carboxymethylaminomethyl (cmnm) group at the wobble position (U34) of certain tRNAs, forming tRNA-cmnm(5)s(2)U34. The polypeptide is tRNA uridine 5-carboxymethylaminomethyl modification enzyme MnmG (Aliarcobacter butzleri (strain RM4018) (Arcobacter butzleri)).